A 197-amino-acid polypeptide reads, in one-letter code: MRTATIKRKTKETDIEVTVDLDGTGVANAATGIGFFDHMLDLLAKHSRIDLTVKAVGDLHVDFHHTTEDVGIALGQAVKQALGNMAGITRYATVLMPMDETLTRVVIDVSGRPFLVFKADFPRDKIGEFDTELVREWFQAFAMNAGVTLHVETLYGENSHHIAESCFKGLARALRAAVAIDPKTAGEVPSTKGQLGG.

The protein belongs to the imidazoleglycerol-phosphate dehydratase family.

It is found in the cytoplasm. The enzyme catalyses D-erythro-1-(imidazol-4-yl)glycerol 3-phosphate = 3-(imidazol-4-yl)-2-oxopropyl phosphate + H2O. It participates in amino-acid biosynthesis; L-histidine biosynthesis; L-histidine from 5-phospho-alpha-D-ribose 1-diphosphate: step 6/9. The chain is Imidazoleglycerol-phosphate dehydratase from Rhodopseudomonas palustris (strain TIE-1).